Reading from the N-terminus, the 358-residue chain is Na(+)/H(+) exchange regulatory cofactor NHE-RF1 (358 aa).

Serine 2 is modified (N-acetylserine). 2 positions are modified to phosphoserine: serine 2 and serine 46. The PDZ 1 domain maps to 14-94 (LCCLEKGPNG…AVRLLVVDPE (81 aa)). Low complexity predominate over residues 114-132 (QEAPGQAEPPAAAEVQGAG). Residues 114 to 192 (QEAPGQAEPP…DPDSPAEASG (79 aa)) are disordered. Residues 135–152 (NEPREADKSHPEQRELRP) are compositionally biased toward basic and acidic residues. Residues 154-234 (LCTMKKGPSG…ETKLLVVDRE (81 aa)) enclose the PDZ 2 domain. A phosphoserine mark is found at serine 162, serine 269, serine 280, serine 290, and serine 291. Residues 277 to 358 (ALESPRPALV…SKKNELFSNL (82 aa)) are disordered. The span at 288–306 (SASSDTSEELNSQDSPPKQ) shows a compositional bias: polar residues. Threonine 293 carries the post-translational modification Phosphothreonine. Phosphoserine is present on residues serine 294, serine 299, and serine 302. Positions 307–319 (DSTAPSSTSSSDP) are enriched in low complexity. A compositionally biased stretch (basic and acidic residues) spans 348–358 (WSKKNELFSNL).

As to quaternary structure, homodimer, and heterodimer with NHERF2. Binds the N-termini of EZR, RDX and MSN. Binds the C-termini of PDGFRA, PDGFRB, ADRB2, NOS2 and CFTR. Binds ARHGAP17, EPI64, RACK1, OPRK1, GNAQ, CTNNB1 and PLCB3. Binds PDZK1. Interacts with CLCN3. Binds the C-terminus of PAG1. In resting T-cells, part of a PAG1-NHERF1-MSN complex which is disrupted upon TCR activation. Forms a complex with CFTR and SLC4A7. Forms a complex with SLC4A7 and ATP6V1B1. Interacts with TRPC4 (via the PDZ-binding domain). Directly interacts with HTR4. Interacts (via the PDZ 1 domain) with PODXL (via the C-terminal PDZ-binding motif DTHL); interaction is not detected in glomerular epithelium cells. Interacts (via the PDZ 1 domain) with PODXL (via the C-terminal PDZ-binding motif DTHL); the interaction take place early in the secretory pathway and is necessary for its apical membrane sorting. Interacts with SLC26A3. Interacts with MCC. Interacts with SLC34A1. Interacts (via the PDZ domains) with SLC26A6 isoform 4 and isoform 5. Interacts (via PDZ domains) with ACE2 (via PDZ-binding motif); the interaction may enhance ACE2 membrane residence. Post-translationally, phosphorylated on serine residues. Detected in liver, kidney, pancreas, prostate, spleen, small intestine and placenta, in particular in the syncytiotrophoblast.

The protein resides in the cytoplasm. The protein localises to the apical cell membrane. It localises to the endomembrane system. Its subcellular location is the cell projection. It is found in the filopodium. The protein resides in the ruffle. The protein localises to the microvillus. Scaffold protein that connects plasma membrane proteins with members of the ezrin/moesin/radixin family and thereby helps to link them to the actin cytoskeleton and to regulate their surface expression. Necessary for recycling of internalized ADRB2. Was first known to play a role in the regulation of the activity and subcellular location of SLC9A3. Necessary for cAMP-mediated phosphorylation and inhibition of SLC9A3. May enhance Wnt signaling. May participate in HTR4 targeting to microvilli. Involved in the regulation of phosphate reabsorption in the renal proximal tubules. Involved in sperm capacitation. May participate in the regulation of the chloride and bicarbonate homeostasis in spermatozoa. This is Na(+)/H(+) exchange regulatory cofactor NHE-RF1 from Homo sapiens (Human).